We begin with the raw amino-acid sequence, 434 residues long: D-amino acid dehydrogenase (434 aa).

Residue 3 to 17 participates in FAD binding; sequence VLVLGSGVIGTASAY.

The protein belongs to the DadA oxidoreductase family. The cofactor is FAD.

It catalyses the reaction a D-alpha-amino acid + A + H2O = a 2-oxocarboxylate + AH2 + NH4(+). It functions in the pathway amino-acid degradation; D-alanine degradation; NH(3) and pyruvate from D-alanine: step 1/1. Functionally, oxidative deamination of D-amino acids. This chain is D-amino acid dehydrogenase, found in Pseudomonas entomophila (strain L48).